Reading from the N-terminus, the 756-residue chain is Alpha-1,2-mannosyltransferase MNN26 (756 aa).

Over 1–10 (MSLRRLSPSH) the chain is Cytoplasmic. A helical transmembrane segment spans residues 11–31 (LILGTLVLGVIIFNLYVLTST). Residues 32–756 (HEDIKKVKGP…NGKNKQGAAS (725 aa)) are Extracellular-facing. Polar residues predominate over residues 723–734 (LGEKSQPKQPEI). The tract at residues 723–756 (LGEKSQPKQPEINNNNNNNNNDDDNGKNKQGAAS) is disordered.

This sequence belongs to the MNN1/MNT family.

The protein resides in the golgi apparatus membrane. Its pathway is protein modification; protein glycosylation. Functionally, alpha-1,2-mannosyltransferase required for cell wall integrity. Responsible for addition of the first alpha-1,2-linked mannose to form the branches on the mannan backbone of oligosaccharides. Addition of alpha-1,2-mannose is required for stabilization of the alpha-1,6-mannose backbone and hence regulates mannan fibril length; and is important for both immune recognition and virulence. The chain is Alpha-1,2-mannosyltransferase MNN26 (MNN26) from Candida albicans (strain SC5314 / ATCC MYA-2876) (Yeast).